We begin with the raw amino-acid sequence, 1132 residues long: Ubiquitin carboxyl-terminal hydrolase 43 (1132 aa).

Residues 1 to 103 (MDPGVGNALG…GARPPGAQGL (103 aa)) form a disordered region. Residues 17 to 28 (RPRRRRSLRRLL) show a composition bias toward basic residues. Composition is skewed to low complexity over residues 29–44 (NRFLLALGSRSRSGDS) and 63–78 (FACAPGPAPASAGSPG). One can recognise a USP domain in the interval 101–710 (QGLKNHGNTC…GAYILFYQKR (610 aa)). The active-site Nucleophile is the cysteine 110. Residue histidine 668 is the Proton acceptor of the active site. Residue arginine 746 is modified to Asymmetric dimethylarginine. Disordered stretches follow at residues 839–891 (RRRP…TGVP), 935–1008 (TVMP…RGQG), 1024–1044 (RTVRTESSPPAPPISLGSDRL), and 1057–1106 (RESP…GEQI). Over residues 941-950 (GDEKPARPEG) the composition is skewed to basic and acidic residues. Over residues 958 to 967 (GSSQVGSQSS) the composition is skewed to low complexity. The residue at position 970 (serine 970) is a Phosphoserine. The span at 994 to 1006 (AAMEERAPDKDRG) shows a compositional bias: basic and acidic residues.

Belongs to the peptidase C19 family.

It catalyses the reaction Thiol-dependent hydrolysis of ester, thioester, amide, peptide and isopeptide bonds formed by the C-terminal Gly of ubiquitin (a 76-residue protein attached to proteins as an intracellular targeting signal).. Functionally, may recognize and hydrolyze the peptide bond at the C-terminal Gly of ubiquitin. Involved in the processing of poly-ubiquitin precursors as well as that of ubiquitinated proteins. This is Ubiquitin carboxyl-terminal hydrolase 43 (Usp43) from Mus musculus (Mouse).